Consider the following 286-residue polypeptide: 2-hydroxy-6-oxononadienedioate/2-hydroxy-6-oxononatrienedioate hydrolase 2 (286 aa).

H266 acts as the Proton acceptor in catalysis.

The protein belongs to the AB hydrolase superfamily. MhpC family. In terms of assembly, homodimer.

The catalysed reaction is (2Z,4E)-2-hydroxy-6-oxonona-2,4-dienedioate + H2O = (2Z)-2-hydroxypenta-2,4-dienoate + succinate + H(+). The enzyme catalyses (2Z,4E,7E)-2-hydroxy-6-oxonona-2,4,7-trienedioate + H2O = (2Z)-2-hydroxypenta-2,4-dienoate + fumarate + H(+). Its pathway is aromatic compound metabolism; 3-phenylpropanoate degradation. Functionally, catalyzes the cleavage of the C5-C6 bond of 2-hydroxy-6-oxononadienedioate and 2-hydroxy-6-oxononatrienedioate, a dienol ring fission product of the bacterial meta-cleavage pathway for degradation of phenylpropionic acid. The polypeptide is 2-hydroxy-6-oxononadienedioate/2-hydroxy-6-oxononatrienedioate hydrolase 2 (Pseudomonas putida (Arthrobacter siderocapsulatus)).